A 330-amino-acid chain; its full sequence is Trans-1,2-dihydrobenzene-1,2-diol dehydrogenase (330 aa).

Belongs to the Gfo/Idh/MocA family. Homodimer.

It carries out the reaction (1R,2R)-1,2-dihydrobenzene-1,2-diol + NADP(+) = catechol + NADPH + H(+). The enzyme catalyses D-xylose + NADP(+) = D-xylono-1,5-lactone + NADPH + H(+). This Xenopus laevis (African clawed frog) protein is Trans-1,2-dihydrobenzene-1,2-diol dehydrogenase (dhdh).